A 208-amino-acid chain; its full sequence is GATA transcription factor 29 (208 aa).

A GATA-type; atypical zinc finger spans residues 155-208; the sequence is GMKKCTNMNCNALNTPMWRRGPLGPKSLCNACGIKFRKEEERKAKRNVVIVLDD.

The protein belongs to the type IV zinc-finger family. Class B subfamily.

Its subcellular location is the nucleus. Functionally, transcriptional regulator that specifically binds 5'-GATA-3' or 5'-GAT-3' motifs within gene promoters. This Arabidopsis thaliana (Mouse-ear cress) protein is GATA transcription factor 29 (GATA29).